The sequence spans 155 residues: 3-hydroxyacyl-[acyl-carrier-protein] dehydratase FabZ (155 aa).

H54 is a catalytic residue.

The protein belongs to the thioester dehydratase family. FabZ subfamily.

It localises to the cytoplasm. It catalyses the reaction a (3R)-hydroxyacyl-[ACP] = a (2E)-enoyl-[ACP] + H2O. In terms of biological role, involved in unsaturated fatty acids biosynthesis. Catalyzes the dehydration of short chain beta-hydroxyacyl-ACPs and long chain saturated and unsaturated beta-hydroxyacyl-ACPs. This Burkholderia ambifaria (strain MC40-6) protein is 3-hydroxyacyl-[acyl-carrier-protein] dehydratase FabZ.